The following is a 304-amino-acid chain: MGPTASGKTDLAIALRQTLPVEVISVDSALIYKGMDIGTAKPSKAELELAPHRLIDILDPSESYSAMNFREDALREMAEITASGRIPLLVGGTMLYYKALLEGLSPLPSADPEIRAEIEAKAEQIGWSGLHRELLAIDPIAGKRINPNDSQRINRALEVFYITGKTMTELTAQQGDSLPYNVLQFAIAPQDRAVLHQRIEQRFYKMMELGFQQEVEKLRARSDLHKDLPSIRCVGYRQMWEYLDGDISLDEAIYKGICATRQLAKRQITWLRGWNSEITWLDSLDPTSSKLKMIEKIAQNSIKL.

2–9 (GPTASGKT) is a binding site for ATP. Residue 4–9 (TASGKT) coordinates substrate. 4 interaction with substrate tRNA regions span residues 27–30 (DSAL), 151–155 (QRINR), 232–237 (RCVGYR), and 265–272 (KRQITWLR).

The protein belongs to the IPP transferase family. As to quaternary structure, monomer. Mg(2+) is required as a cofactor.

It catalyses the reaction adenosine(37) in tRNA + dimethylallyl diphosphate = N(6)-dimethylallyladenosine(37) in tRNA + diphosphate. Catalyzes the transfer of a dimethylallyl group onto the adenine at position 37 in tRNAs that read codons beginning with uridine, leading to the formation of N6-(dimethylallyl)adenosine (i(6)A). The protein is tRNA dimethylallyltransferase of Actinobacillus pleuropneumoniae serotype 7 (strain AP76).